Here is a 205-residue protein sequence, read N- to C-terminus: MSVNASTLVADNLADAASLEGLPENVSAGHAAAGTEEHHVDPTALGMTATAWVSLAMVIVILLLLWKKVPSVIGASLDKKIASIRANLDEAAALRADAEKLKAEYEAKAKAAAKEAEEMLAHARSEAEAIVSQARVDATALIERRGKMAEDKIAAAERGAVAEVRAKAASAAAAAAGALIAERNNAKADKALIDGAIDALGNARF.

The helical transmembrane segment at 45-65 threads the bilayer; the sequence is LGMTATAWVSLAMVIVILLLL.

It belongs to the ATPase B chain family. In terms of assembly, F-type ATPases have 2 components, F(1) - the catalytic core - and F(0) - the membrane proton channel. F(1) has five subunits: alpha(3), beta(3), gamma(1), delta(1), epsilon(1). F(0) has three main subunits: a(1), b(2) and c(10-14). The alpha and beta chains form an alternating ring which encloses part of the gamma chain. F(1) is attached to F(0) by a central stalk formed by the gamma and epsilon chains, while a peripheral stalk is formed by the delta and b chains.

The protein resides in the cell inner membrane. Its function is as follows. F(1)F(0) ATP synthase produces ATP from ADP in the presence of a proton or sodium gradient. F-type ATPases consist of two structural domains, F(1) containing the extramembraneous catalytic core and F(0) containing the membrane proton channel, linked together by a central stalk and a peripheral stalk. During catalysis, ATP synthesis in the catalytic domain of F(1) is coupled via a rotary mechanism of the central stalk subunits to proton translocation. Component of the F(0) channel, it forms part of the peripheral stalk, linking F(1) to F(0). The sequence is that of ATP synthase subunit b from Rhizorhabdus wittichii (strain DSM 6014 / CCUG 31198 / JCM 15750 / NBRC 105917 / EY 4224 / RW1) (Sphingomonas wittichii).